A 436-amino-acid polypeptide reads, in one-letter code: UDP-N-acetylmuramate--L-alanine ligase (436 aa).

Position 108–114 (108–114) interacts with ATP; that stretch reads GAHGKTS.

The protein belongs to the MurCDEF family.

The protein localises to the cytoplasm. It catalyses the reaction UDP-N-acetyl-alpha-D-muramate + L-alanine + ATP = UDP-N-acetyl-alpha-D-muramoyl-L-alanine + ADP + phosphate + H(+). Its pathway is cell wall biogenesis; peptidoglycan biosynthesis. Functionally, cell wall formation. The chain is UDP-N-acetylmuramate--L-alanine ligase from Bacillus cereus (strain Q1).